The chain runs to 135 residues: Envelope glycoprotein N (135 aa).

Residues 1-19 form the signal peptide; the sequence is MEWNTLVLGLLVLSVVASS. Residues 20–98 lie on the Virion surface side of the membrane; sequence NNTSTASTPR…SHMYELSLSS (79 aa). The span at 21–68 shows a compositional bias: low complexity; sequence NTSTASTPRPSSSTHASTTVKATTVATTSTTTATSTSSTTSAKPGSTT. Positions 21-73 are disordered; it reads NTSTASTPRPSSSTHASTTVKATTVATTSTTTATSTSSTTSAKPGSTTHDPNV. The helical transmembrane segment at 99–119 threads the bilayer; it reads FAAWWTMLNALILMGAFCIVL. The Intravirion portion of the chain corresponds to 120–135; that stretch reads RHCCFQNFTATTTKGY.

The protein belongs to the herpesviridae glycoprotein N family. As to quaternary structure, interacts (via N-terminus) with gM (via N-terminus). The gM-gN heterodimer forms the gCII complex. Post-translationally, O-glycosylated.

It is found in the virion membrane. Its subcellular location is the host membrane. It localises to the host Golgi apparatus. The protein resides in the host trans-Golgi network. Envelope glycoprotein necessary for proper maturation of gM and modulation of its membrane fusion activity. Also plays a critical role in virion morphogenesis. The polypeptide is Envelope glycoprotein N (Homo sapiens (Human)).